The sequence spans 1325 residues: Nonribosomal peptide synthetase (1325 aa).

The segment at 248-644 (YQQLDRLSTR…LGEIEYQIQQ (397 aa)) is adenylation. The Carrier domain maps to 779 to 856 (EIVNPGEITL…DQARLLRPLS (78 aa)). O-(pantetheine 4'-phosphoryl)serine is present on serine 816. The interval 893–1310 (EDVYPCTPLQ…DDYSTTLHTL (418 aa)) is condensation.

It belongs to the NRP synthetase family. Pantetheine 4'-phosphate is required as a cofactor.

The protein operates within antifungal biosynthesis. Nonribosomal peptide synthetase; part of the gene cluster that mediates the biosynthesis of the tetrahydropyranyl antifungal agent lanomycin that acts as an inhibitor of CYP51 and blocks the ergosterol biosynthesis. The biosynthesis probably begins with the formation of an hexaketide, followed by methionine mediated alkylation of C-2 and C-6, and methylation of the reduced C-3 oxygen, pyran forming reductive ring closure, oxygenation of C-4, beta-keto reduction, enoyl reduction and dehydration of the remaining oxygens, and finally, acylation with glycine to complete the biosynthesis. This chain is Nonribosomal peptide synthetase, found in Pyrenophora dematioidea (Helminthosporium dematioideum).